Reading from the N-terminus, the 330-residue chain is Biotin synthase (330 aa).

The Radical SAM core domain maps to 53 to 276 (NNIRLNVLLS…VFPFKELRLS (224 aa)). Residues cysteine 68, cysteine 72, and cysteine 75 each coordinate [4Fe-4S] cluster. Residues cysteine 112, cysteine 144, cysteine 204, and arginine 274 each contribute to the [2Fe-2S] cluster site.

This sequence belongs to the radical SAM superfamily. Biotin synthase family. As to quaternary structure, homodimer. Requires [4Fe-4S] cluster as cofactor. It depends on [2Fe-2S] cluster as a cofactor.

The catalysed reaction is (4R,5S)-dethiobiotin + (sulfur carrier)-SH + 2 reduced [2Fe-2S]-[ferredoxin] + 2 S-adenosyl-L-methionine = (sulfur carrier)-H + biotin + 2 5'-deoxyadenosine + 2 L-methionine + 2 oxidized [2Fe-2S]-[ferredoxin]. The protein operates within cofactor biosynthesis; biotin biosynthesis; biotin from 7,8-diaminononanoate: step 2/2. Its function is as follows. Catalyzes the conversion of dethiobiotin (DTB) to biotin by the insertion of a sulfur atom into dethiobiotin via a radical-based mechanism. The sequence is that of Biotin synthase from Streptococcus agalactiae serotype V (strain ATCC BAA-611 / 2603 V/R).